We begin with the raw amino-acid sequence, 1003 residues long: Putative helicase MOV-10 (1003 aa).

Position 148 is an N6-acetyllysine (Lys-148). Residues Thr-160 and Thr-254 each carry the phosphothreonine modification. Residue Ser-432 is modified to Phosphoserine. 524–531 (GPPGTGKT) serves as a coordination point for ATP. Residues 645–648 (DEAG) carry the DEAG box motif. The interaction with AGO2 and APOBEC3G stretch occupies residues 921–965 (NPLLLGHDPDWKVFLEFCKENGGYTGCPFPAKLDLQQGQNLLQGL). Residues 968–1003 (LSPSTSGLKSHDYLPQEREGEEGLSLQVEPEWRNEL) are disordered. Residues Ser-969 and Ser-977 each carry the phosphoserine modification. Residues 976-985 (KSHDYLPQER) show a composition bias toward basic and acidic residues.

Belongs to the DNA2/NAM7 helicase family. SDE3 subfamily. As to quaternary structure, interacts with DICER1, AGO2, TARBP2, EIF6 and RPL7A (60S ribosome subunit); they form a large RNA-induced silencing complex (RISC). Interacts with APOBEC3G in an RNA-dependent manner. Interacts with TRIM71 (via NHL repeats) in an RNA-dependent manner. Interacts with both protein products of LIRE1, ORF1p and ORF2p. Interacts with TUT4 and, to a lesser extent, TUT7; the interactions are RNA-dependent. Interacts with AGO2, TNRC6B and UPF1; the interactions are direct and RNA-dependent. Interacts with FMR1; this interaction is direct, occurs in an RNA-dependent manner on polysomes and induces association of MOV10 with RNAs. Interacts with SHFL; the interaction increases in presence of RNA. Interacts with DHX34; the interaction is-RNA independent. Interacts with RBM46. Post-translationally, ubiquitinated by the DCX(DCAF12) complex that specifically recognizes the glutamate-leucine (Glu-Leu) degron at the C-terminus, leading to its degradation.

Its subcellular location is the cytoplasm. The protein localises to the P-body. It localises to the cytoplasmic ribonucleoprotein granule. It is found in the stress granule. The protein resides in the nucleus. The enzyme catalyses ATP + H2O = ADP + phosphate + H(+). 5' to 3' RNA helicase that is involved in a number of cellular roles ranging from mRNA metabolism and translation, modulation of viral infectivity, inhibition of retrotransposition, or regulation of synaptic transmission. Plays an important role in innate antiviral immunity by promoting type I interferon production. Mechanistically, specifically uses IKKepsilon/IKBKE as the mediator kinase for IRF3 activation. Contributes to UPF1 mRNA target degradation by translocation along 3' UTRs. Required for microRNA (miRNA)-mediated gene silencing by the RNA-induced silencing complex (RISC). Required for both miRNA-mediated translational repression and miRNA-mediated cleavage of complementary mRNAs by RISC. In cooperation with FMR1, regulates miRNA-mediated translational repression by AGO2. Restricts retrotransposition of long interspersed element-1 (LINE-1) in cooperation with TUT4 and TUT7 counteracting the RNA chaperonne activity of L1RE1. Facilitates LINE-1 uridylation by TUT4 and TUT7. Required for embryonic viability and for normal central nervous system development and function. Plays two critical roles in early brain development: suppresses retroelements in the nucleus by directly inhibiting cDNA synthesis, while regulates cytoskeletal mRNAs to influence neurite outgrowth in the cytosol. May function as a messenger ribonucleoprotein (mRNP) clearance factor. In Bos taurus (Bovine), this protein is Putative helicase MOV-10 (MOV10).